The sequence spans 96 residues: Large ribosomal subunit protein bL27 (96 aa).

Residues 1 to 11 (MLKTLENLQLF) constitute a propeptide that is removed on maturation. The tract at residues 13–36 (HKKGGGSTSNGRDSQAKRLGAKAA) is disordered.

The protein belongs to the bacterial ribosomal protein bL27 family. In terms of processing, the N-terminus is cleaved by ribosomal processing cysteine protease Prp.

The sequence is that of Large ribosomal subunit protein bL27 from Streptococcus thermophilus (strain CNRZ 1066).